The primary structure comprises 446 residues: Putative hydrolase YbfO (446 aa).

An N-terminal signal peptide occupies residues 1–28 (MKRMIVRMTLPLLIVCLAFSSFSASARA).

In Bacillus subtilis (strain 168), this protein is Putative hydrolase YbfO (ybfO).